Reading from the N-terminus, the 356-residue chain is Phospho-2-dehydro-3-deoxyheptonate aldolase, Tyr-sensitive (356 aa).

This sequence belongs to the class-I DAHP synthase family. A divalent metal cation serves as cofactor.

The catalysed reaction is D-erythrose 4-phosphate + phosphoenolpyruvate + H2O = 7-phospho-2-dehydro-3-deoxy-D-arabino-heptonate + phosphate. The protein operates within metabolic intermediate biosynthesis; chorismate biosynthesis; chorismate from D-erythrose 4-phosphate and phosphoenolpyruvate: step 1/7. Its activity is regulated as follows. Specifically feedback inhibited by tyrosine with 50% inhibition observed at 9 microM tyrosine, pH 7.0. Stereospecific condensation of phosphoenolpyruvate (PEP) and D-erythrose-4-phosphate (E4P) giving rise to 3-deoxy-D-arabino-heptulosonate-7-phosphate (DAHP). In Escherichia coli (strain K12), this protein is Phospho-2-dehydro-3-deoxyheptonate aldolase, Tyr-sensitive (aroF).